The sequence spans 132 residues: MTMTDPIADFLTRLRNANSAYHDQVKAPHSKLKANIAEILKREGYIADYRTEDAQVGKTLVVDLKYGPSRERSLAGVRRVSKPGLRVYAKSTNLPKVLGGLGVAIISTSQGLLTDKQAAKQGVGGEVLAYVW.

The protein belongs to the universal ribosomal protein uS8 family. In terms of assembly, part of the 30S ribosomal subunit. Contacts proteins S5 and S12.

One of the primary rRNA binding proteins, it binds directly to 16S rRNA central domain where it helps coordinate assembly of the platform of the 30S subunit. The polypeptide is Small ribosomal subunit protein uS8 (Nocardia farcinica (strain IFM 10152)).